A 213-amino-acid polypeptide reads, in one-letter code: MSETAPAAPAAAPPAEKTPVKKKAAKKPAGARRKASGPPVSELITKAVAASKERSGVSLAALKKALAAAGYDVEKNNSRIKLGLKSLVSKGTLVQTKGTGASGSFKLNKKAATGEAKPKAKKAGAAKPKKAAGAAKKTKKATGAATPKKTAKKTPKKAKKPAAAAVTKKVAKSPKKAKAAKPKKAAKSAAKAVKPKAAKPKVAKPKKAAPKKK.

A compositionally biased stretch (low complexity) spans M1 to K17. A disordered region spans residues M1–S41. N-acetylserine; partial is present on S2. Position 2 is a phosphoserine (S2). The residue at position 17 (K17) is an N6-acetyllysine. Residues V20–A35 are compositionally biased toward basic residues. An N6-(2-hydroxyisobutyryl)lysine mark is found at K23, K26, and K27. At K34 the chain carries N6-(beta-hydroxybutyryl)lysine; alternate. Position 34 is an N6-crotonyllysine; alternate (K34). K34 bears the N6-methyllysine; alternate mark. The region spanning S36 to K109 is the H15 domain. Residue K46 is modified to N6-(2-hydroxyisobutyryl)lysine. K52 carries the N6-(beta-hydroxybutyryl)lysine; alternate modification. An N6-(2-hydroxyisobutyryl)lysine; alternate modification is found at K52. R54 carries the post-translational modification Citrulline. An N6-(2-hydroxyisobutyryl)lysine modification is found at K63. K64 bears the N6-(beta-hydroxybutyryl)lysine; alternate mark. Position 64 is an N6-crotonyllysine; alternate (K64). At K64 the chain carries N6-(2-hydroxyisobutyryl)lysine; alternate. An N6-(2-hydroxyisobutyryl)lysine mark is found at K75 and K81. An N6-(beta-hydroxybutyryl)lysine; alternate mark is found at K85 and K90. N6-crotonyllysine; alternate is present on residues K85, K90, and K97. N6-(2-hydroxyisobutyryl)lysine; alternate occurs at positions 85, 90, and 97. The interval Q95–K213 is disordered. Residue K97 is modified to N6-succinyllysine; alternate. S104 carries the post-translational modification Phosphoserine; by PKC. K106 carries the post-translational modification N6-(beta-hydroxybutyryl)lysine. N6-(2-hydroxyisobutyryl)lysine occurs at positions 110, 117, 121, 129, and 136. A compositionally biased stretch (basic residues) spans K119–K140. At T146 the chain carries Phosphothreonine. K148 is subject to N6-(2-hydroxyisobutyryl)lysine. The segment covering K149–K160 has biased composition (basic residues). N6-crotonyllysine; alternate is present on residues K159 and K168. N6-(2-hydroxyisobutyryl)lysine; alternate is present on residues K159 and K168. The segment covering K169–A186 has biased composition (basic residues). K187 carries the N6-methyllysine; by EHMT1 and EHMT2 modification. An ADP-ribosylserine modification is found at S188. Basic residues predominate over residues V193 to K213.

Belongs to the histone H1/H5 family. Post-translationally, H1 histones are progressively phosphorylated during the cell cycle, becoming maximally phosphorylated during late G2 phase and M phase, and being dephosphorylated sharply thereafter. Crotonylation (Kcr) is specifically present in male germ cells and marks testis-specific genes in post-meiotic cells, including X-linked genes that escape sex chromosome inactivation in haploid cells. Crotonylation marks active promoters and enhancers and confers resistance to transcriptional repressors. It is also associated with post-meiotically activated genes on autosomes. In terms of processing, ADP-ribosylated on Ser-188 in response to DNA damage. Post-translationally, citrullination at Arg-54 (H1R54ci) by PADI4 takes place within the DNA-binding site of H1 and results in its displacement from chromatin and global chromatin decondensation, thereby promoting pluripotency and stem cell maintenance.

The protein resides in the nucleus. Its subcellular location is the chromosome. Functionally, histone H1 protein binds to linker DNA between nucleosomes forming the macromolecular structure known as the chromatin fiber. Histones H1 are necessary for the condensation of nucleosome chains into higher-order structured fibers. Also acts as a regulator of individual gene transcription through chromatin remodeling, nucleosome spacing and DNA methylation. The chain is Histone H1.2 from Bos taurus (Bovine).